The primary structure comprises 376 residues: Thymidine kinase (376 aa).

Residues 1 to 44 form a disordered region; sequence MASYPGHQHASAFDQAARSRGHSNRRTALRPRRQQEATEVRPEQ. Residues 19-32 are compositionally biased toward basic residues; that stretch reads SRGHSNRRTALRPR. Residues 33–44 are compositionally biased toward basic and acidic residues; it reads RQQEATEVRPEQ. 56-63 serves as a coordination point for ATP; that stretch reads GPHGMGKT. Residue Glu-83 is the Proton acceptor of the active site. Substrate contacts are provided by Tyr-101 and Gln-125. Arg-216 serves as a coordination point for ATP. Arg-222 contributes to the substrate binding site. The tract at residues 260 to 280 is disordered; it reads GQLSGTAVPPQGAEPQSNAGP.

The protein belongs to the herpesviridae thymidine kinase family. Homodimer.

The enzyme catalyses thymidine + ATP = dTMP + ADP + H(+). In terms of biological role, catalyzes the transfer of the gamma-phospho group of ATP to thymidine to generate dTMP in the salvage pathway of pyrimidine synthesis. The dTMP serves as a substrate for DNA polymerase during viral DNA replication. Allows the virus to be reactivated and to grow in non-proliferative cells lacking a high concentration of phosphorylated nucleic acid precursors. This chain is Thymidine kinase, found in Human herpesvirus 1 (strain SC16) (HHV-1).